The primary structure comprises 191 residues: Potassium-transporting ATPase KdpC subunit (191 aa).

The helical transmembrane segment at 10-30 threads the bilayer; it reads ITLVFCVFFSVFYILVLWLFA.

The protein belongs to the KdpC family. The system is composed of three essential subunits: KdpA, KdpB and KdpC.

It is found in the cell inner membrane. Functionally, part of the high-affinity ATP-driven potassium transport (or Kdp) system, which catalyzes the hydrolysis of ATP coupled with the electrogenic transport of potassium into the cytoplasm. This subunit acts as a catalytic chaperone that increases the ATP-binding affinity of the ATP-hydrolyzing subunit KdpB by the formation of a transient KdpB/KdpC/ATP ternary complex. This Bacteroides fragilis (strain YCH46) protein is Potassium-transporting ATPase KdpC subunit.